The sequence spans 179 residues: Acireductone dioxygenase (179 aa).

The interval 1–21 (MVQAWYMDDSTEDQRKPHHLQ) is disordered. Fe(2+) contacts are provided by His-88, His-90, Glu-94, and His-133. His-88, His-90, Glu-94, and His-133 together coordinate Ni(2+).

The protein belongs to the acireductone dioxygenase (ARD) family. As to quaternary structure, monomer. Interacts with MMP14. The cofactor is Fe(2+). Ni(2+) is required as a cofactor.

The protein resides in the cytoplasm. The protein localises to the nucleus. Its subcellular location is the cell membrane. The catalysed reaction is 1,2-dihydroxy-5-(methylsulfanyl)pent-1-en-3-one + O2 = 4-methylsulfanyl-2-oxobutanoate + formate + 2 H(+). It catalyses the reaction 1,2-dihydroxy-5-(methylsulfanyl)pent-1-en-3-one + O2 = 3-(methylsulfanyl)propanoate + CO + formate + 2 H(+). Its pathway is amino-acid biosynthesis; L-methionine biosynthesis via salvage pathway; L-methionine from S-methyl-5-thio-alpha-D-ribose 1-phosphate: step 5/6. Catalyzes 2 different reactions between oxygen and the acireductone 1,2-dihydroxy-3-keto-5-methylthiopentene (DHK-MTPene) depending upon the metal bound in the active site. Fe-containing acireductone dioxygenase (Fe-ARD) produces formate and 2-keto-4-methylthiobutyrate (KMTB), the alpha-ketoacid precursor of methionine in the methionine recycle pathway. Ni-containing acireductone dioxygenase (Ni-ARD) produces methylthiopropionate, carbon monoxide and formate, and does not lie on the methionine recycle pathway. The chain is Acireductone dioxygenase (adi1) from Xenopus tropicalis (Western clawed frog).